The chain runs to 270 residues: MAKKTVEGEHGTPKTNFTKKETSKNHDDFKKIIGHKVVEEHYVEYEVELTSGKTITATEFDFKGDDSLLSTYKKKVTKQSDDSSGEYAVERVLAHRKVKGSPLYLVQWKGYPHPVWNSEMWEEDLDNCKDLLAAYKKHQEDLKIAQTPKKTPSKTPKKTPKSLKRRALTPSDDEEEAGPIAPEPKKTPKQSTKKLKRTTSPETNLVEKSKKKAIPDLENHTLDQEKNDVIERVEEIQEDEDDDDEQREEVVTTAPVETKSRWGFGSWKWF.

Disordered regions lie at residues 1 to 24 and 143 to 229; these read MAKKTVEGEHGTPKTNFTKKETSK and KIAQ…KNDV. The 61-residue stretch at 87–147 folds into the Chromo domain; it reads YAVERVLAHR…HQEDLKIAQT (61 aa). Composition is skewed to basic residues over residues 151–167 and 187–197; these read TPSKTPKKTPKSLKRRA and TPKQSTKKLKR. A compositionally biased stretch (basic and acidic residues) spans 205–229; that stretch reads LVEKSKKKAIPDLENHTLDQEKNDV.

Interacts with mono-, di- and tri-methylated 'Lys-9' residues on histone H3. Weakly interacts with methylated 'Lys-37' residues on histone H3.

Its subcellular location is the nucleus inner membrane. It localises to the membrane. Functionally, chromatin anchor protein which binds to methylated lysine residues on histone H3, thereby recruiting heterochromatin to the nuclear periphery, especially in embryonic cells, with a lesser role in differentiated cells. May be required for the correct positioning of chromatin and nucleoli in embryos. This is Chromo domain-containing protein cec-4 from Caenorhabditis elegans.